Here is an 869-residue protein sequence, read N- to C-terminus: Valine--tRNA ligase (869 aa).

The short motif at 47 to 57 (PYPTGNFHIGN) is the 'HIGH' region element. A 'KMSKS' region motif is present at residues 521–525 (KMSKS). Lys524 contacts ATP.

Belongs to the class-I aminoacyl-tRNA synthetase family. ValS type 2 subfamily.

Its subcellular location is the cytoplasm. The catalysed reaction is tRNA(Val) + L-valine + ATP = L-valyl-tRNA(Val) + AMP + diphosphate. Functionally, catalyzes the attachment of valine to tRNA(Val). As ValRS can inadvertently accommodate and process structurally similar amino acids such as threonine, to avoid such errors, it has a 'posttransfer' editing activity that hydrolyzes mischarged Thr-tRNA(Val) in a tRNA-dependent manner. The polypeptide is Valine--tRNA ligase (Methanosarcina acetivorans (strain ATCC 35395 / DSM 2834 / JCM 12185 / C2A)).